Consider the following 204-residue polypeptide: bMERB domain-containing protein 1 (204 aa).

The bMERB domain maps to 3–150 (LKQSLSTHLE…EQEEDKEMAD (148 aa)). Positions 162-187 (VTKSPASSRAEKKAEPPPSKPTVAKT) are disordered.

This Homo sapiens (Human) protein is bMERB domain-containing protein 1.